Here is a 185-residue protein sequence, read N- to C-terminus: Ribosome-recycling factor (185 aa).

This sequence belongs to the RRF family.

Its subcellular location is the cytoplasm. In terms of biological role, responsible for the release of ribosomes from messenger RNA at the termination of protein biosynthesis. May increase the efficiency of translation by recycling ribosomes from one round of translation to another. In Pectobacterium atrosepticum (strain SCRI 1043 / ATCC BAA-672) (Erwinia carotovora subsp. atroseptica), this protein is Ribosome-recycling factor.